The primary structure comprises 881 residues: Probable alpha/beta-glucosidase agdC (881 aa).

Positions 1–14 are cleaved as a signal peptide; that stretch reads MLRSLLLLAPLVGA. N-linked (GlcNAc...) asparagine glycans are attached at residues asparagine 171, asparagine 293, and asparagine 373. Catalysis depends on aspartate 422, which acts as the Nucleophile. Glutamate 425 is an active-site residue. The tract at residues 440-485 is disordered; it reads YARDNDLPPAAPPVRPSNPRPLPGFPGDFQPSSSSKRSTKGSKVGL. Residues 448–463 are compositionally biased toward pro residues; it reads PAAPPVRPSNPRPLPG. An N-linked (GlcNAc...) asparagine glycan is attached at asparagine 506. Catalysis depends on aspartate 571, which acts as the Proton donor. N-linked (GlcNAc...) asparagine glycosylation is found at asparagine 572, asparagine 608, and asparagine 742.

Belongs to the glycosyl hydrolase 31 family.

It is found in the secreted. The catalysed reaction is Hydrolysis of terminal, non-reducing (1-&gt;4)-linked alpha-D-glucose residues with release of alpha-D-glucose.. It catalyses the reaction Hydrolysis of terminal, non-reducing beta-D-glucosyl residues with release of beta-D-glucose.. In terms of biological role, glucosidase involved in the degradation of cellulosic biomass. Has both alpha- and beta-glucosidase activity. The polypeptide is Probable alpha/beta-glucosidase agdC (agdC) (Aspergillus fumigatus (strain CBS 144.89 / FGSC A1163 / CEA10) (Neosartorya fumigata)).